Consider the following 425-residue polypeptide: Glutamate-1-semialdehyde 2,1-aminomutase (425 aa).

Lysine 265 bears the N6-(pyridoxal phosphate)lysine mark.

The protein belongs to the class-III pyridoxal-phosphate-dependent aminotransferase family. HemL subfamily. In terms of assembly, homodimer. Pyridoxal 5'-phosphate serves as cofactor.

It is found in the cytoplasm. The enzyme catalyses (S)-4-amino-5-oxopentanoate = 5-aminolevulinate. It functions in the pathway porphyrin-containing compound metabolism; protoporphyrin-IX biosynthesis; 5-aminolevulinate from L-glutamyl-tRNA(Glu): step 2/2. The polypeptide is Glutamate-1-semialdehyde 2,1-aminomutase (Clostridium perfringens (strain SM101 / Type A)).